Reading from the N-terminus, the 152-residue chain is Transcriptional regulator MraZ (152 aa).

SpoVT-AbrB domains are found at residues 5–52 (HSNR…PMPE) and 81–124 (ATEV…DQGR).

Belongs to the MraZ family. Forms oligomers.

The protein localises to the cytoplasm. It localises to the nucleoid. The chain is Transcriptional regulator MraZ from Solidesulfovibrio magneticus (strain ATCC 700980 / DSM 13731 / RS-1) (Desulfovibrio magneticus).